The sequence spans 1297 residues: DNA-directed RNA polymerase subunit beta' (1297 aa).

C60, C62, C75, and C78 together coordinate Zn(2+). Mg(2+)-binding residues include D535, D537, and D539. Residues C883, C961, C968, and C971 each coordinate Zn(2+).

The protein belongs to the RNA polymerase beta' chain family. The RNAP catalytic core consists of 2 alpha, 1 beta, 1 beta' and 1 omega subunit. When a sigma factor is associated with the core the holoenzyme is formed, which can initiate transcription. Mg(2+) serves as cofactor. The cofactor is Zn(2+).

It carries out the reaction RNA(n) + a ribonucleoside 5'-triphosphate = RNA(n+1) + diphosphate. Functionally, DNA-dependent RNA polymerase catalyzes the transcription of DNA into RNA using the four ribonucleoside triphosphates as substrates. The chain is DNA-directed RNA polymerase subunit beta' from Salinispora tropica (strain ATCC BAA-916 / DSM 44818 / JCM 13857 / NBRC 105044 / CNB-440).